Here is a 195-residue protein sequence, read N- to C-terminus: Peptidyl-tRNA hydrolase (195 aa).

Tyr17 is a binding site for tRNA. Catalysis depends on His22, which acts as the Proton acceptor. The tRNA site is built by Tyr68, Asn70, and Asn116.

It belongs to the PTH family. As to quaternary structure, monomer.

It localises to the cytoplasm. It carries out the reaction an N-acyl-L-alpha-aminoacyl-tRNA + H2O = an N-acyl-L-amino acid + a tRNA + H(+). Its function is as follows. Hydrolyzes ribosome-free peptidyl-tRNAs (with 1 or more amino acids incorporated), which drop off the ribosome during protein synthesis, or as a result of ribosome stalling. In terms of biological role, catalyzes the release of premature peptidyl moieties from peptidyl-tRNA molecules trapped in stalled 50S ribosomal subunits, and thus maintains levels of free tRNAs and 50S ribosomes. This is Peptidyl-tRNA hydrolase from Shewanella sp. (strain MR-4).